The primary structure comprises 338 residues: Isopentenyl-diphosphate delta-isomerase (338 aa).

Substrate is bound at residue 13–14 (RK). FMN-binding positions include 72–74 (AMT), Ser-102, and Asn-130. Residue 102-104 (SQR) participates in substrate binding. Gln-165 is a binding site for substrate. Glu-166 provides a ligand contact to Mg(2+). Residues Lys-197, Thr-227, 274 to 276 (GIR), and 295 to 296 (AR) contribute to the FMN site.

The protein belongs to the IPP isomerase type 2 family. As to quaternary structure, homooctamer. Dimer of tetramers. Requires FMN as cofactor. The cofactor is NADPH. Mg(2+) serves as cofactor.

It localises to the cytoplasm. The enzyme catalyses isopentenyl diphosphate = dimethylallyl diphosphate. In terms of biological role, involved in the biosynthesis of isoprenoids. Catalyzes the 1,3-allylic rearrangement of the homoallylic substrate isopentenyl (IPP) to its allylic isomer, dimethylallyl diphosphate (DMAPP). This chain is Isopentenyl-diphosphate delta-isomerase, found in Deinococcus radiodurans (strain ATCC 13939 / DSM 20539 / JCM 16871 / CCUG 27074 / LMG 4051 / NBRC 15346 / NCIMB 9279 / VKM B-1422 / R1).